Here is a 186-residue protein sequence, read N- to C-terminus: ADP-ribosylation factor-like protein 6 (186 aa).

Glycine 2 carries N-myristoyl glycine lipidation. Residues 24 to 31, threonine 50, 69 to 73, glycine 72, 130 to 133, and alanine 164 contribute to the GTP site; these read GLDNSGKT, DMSGQ, and NKMD. Mg(2+)-binding residues include threonine 31 and threonine 50.

This sequence belongs to the small GTPase superfamily. Arf family. As to quaternary structure, interacts with SEC61B, ARL6IP1, ARL6IP2, ARL6IP3, ARL6IP4 ARL6IP5 and ARL6IP6. Interacts (GTP-bound form) with the BBSome a complex that contains BBS1, BBS2, BBS4, BBS5, BBS7, BBS8/TTC8, BBS9 and BBIP10. Interacts (GTP-free form) with IFT27.

It localises to the cell projection. It is found in the cilium membrane. The protein localises to the cytoplasm. Its subcellular location is the cytoskeleton. The protein resides in the cilium axoneme. It localises to the cilium basal body. In terms of biological role, involved in membrane protein trafficking at the base of the ciliary organelle. Mediates recruitment onto plasma membrane of the BBSome complex which would constitute a coat complex required for sorting of specific membrane proteins to the primary cilia. Together with BBS1, is necessary for correct trafficking of PKD1 to primary cilia. Together with the BBSome complex and LTZL1, controls SMO ciliary trafficking and contributes to the sonic hedgehog (SHH) pathway regulation. May regulate cilia assembly and disassembly and subsequent ciliary signaling events such as the Wnt signaling cascade. Isoform 2 may be required for proper retinal function and organization. The sequence is that of ADP-ribosylation factor-like protein 6 (ARL6) from Homo sapiens (Human).